A 154-amino-acid polypeptide reads, in one-letter code: Low molecular weight protein-tyrosine-phosphatase PtpA (154 aa).

The active-site Nucleophile is the Cys8. Arg14 is an active-site residue. The active-site Proton donor is the Asp120.

The protein belongs to the low molecular weight phosphotyrosine protein phosphatase family.

It carries out the reaction O-phospho-L-tyrosyl-[protein] + H2O = L-tyrosyl-[protein] + phosphate. Dephosphorylates the phosphotyrosine-containing proteins. The polypeptide is Low molecular weight protein-tyrosine-phosphatase PtpA (ptpA) (Staphylococcus haemolyticus (strain JCSC1435)).